A 128-amino-acid polypeptide reads, in one-letter code: uncharacterized protein (128 aa).

This is an uncharacterized protein from Borreliella burgdorferi (strain ATCC 35210 / DSM 4680 / CIP 102532 / B31) (Borrelia burgdorferi).